Here is a 65-residue protein sequence, read N- to C-terminus: MDTRLMDLLVCPICKGPLTHDHSSHELHCAADRLAFPIRDGIPVMLESEARALDESPSQAAPLSE.

It belongs to the UPF0434 family.

The chain is UPF0434 protein Mpe_A2486 from Methylibium petroleiphilum (strain ATCC BAA-1232 / LMG 22953 / PM1).